Here is a 125-residue protein sequence, read N- to C-terminus: Probable endoribonuclease HigB1 (125 aa).

It belongs to the mycobacterial HigB family.

Its function is as follows. Toxic component of an atypical, type II toxin-antitoxin chaperone (TAC) system. Probably an endoribonuclease, neutralized by its cognate antitoxin HigA which also requires SecB-like chaperone MT2006 (AC Q7D7P7). In Mycobacterium tuberculosis (strain CDC 1551 / Oshkosh), this protein is Probable endoribonuclease HigB1.